A 2148-amino-acid chain; its full sequence is Polyketide synthase 1 (2148 aa).

The N-terminal acylcarrier protein transacylase domain (SAT) stretch occupies residues phenylalanine 19–histidine 261. The region spanning glutamate 394–aspartate 829 is the Ketosynthase family 3 (KS3) domain. Catalysis depends on for beta-ketoacyl synthase activity residues cysteine 566, histidine 701, and histidine 745. The tract at residues alanine 929–tryptophan 1233 is malonyl-CoA:ACP transacylase (MAT) domain. The active-site For acyl/malonyl transferase activity is the serine 1018. Residues threonine 1310–proline 1624 are product template (PT) domain. The N-terminal hotdog fold stretch occupies residues histidine 1314–valine 1447. Residues histidine 1314–asparagine 1619 enclose the PKS/mFAS DH domain. Histidine 1346 (proton acceptor; for dehydratase activity) is an active-site residue. The interval leucine 1474–asparagine 1619 is C-terminal hotdog fold. The active-site Proton donor; for dehydratase activity is the aspartate 1533. The disordered stretch occupies residues asparagine 1619–alanine 1657. The span at serine 1635–serine 1650 shows a compositional bias: low complexity. A Carrier 1 domain is found at arginine 1678–threonine 1752. Serine 1712 bears the O-(pantetheine 4'-phosphoryl)serine mark. The segment covering serine 1755 to proline 1790 has biased composition (low complexity). Positions serine 1755–glycine 1796 are disordered. Residues serine 1793–histidine 1870 enclose the Carrier 2 domain. Serine 1830 is subject to O-(pantetheine 4'-phosphoryl)serine. The interval leucine 1882–threonine 2146 is thioesterase (TE) domain. The For thioesterase activity role is filled by serine 1973.

In terms of biological role, polyketide synthase; part of the Pks1 gene cluster that mediates the biosynthesis of an anthraquinone derivative pigment that contributes to conidial pigmentation that provides protection from UV radiation, heat and cold stress. The polyketide synthase Pks1 produces 1-acetyl-2,4,6,8-tetrahydroxy-9,10-anthraquinone though condensation of acetyl-CoA with malonyl-CoA. The dehydratase EthD and the laccase Mlac1 further convert the anthraquinone derivative into the final conidial pigment. This Metarhizium guizhouense (strain ARSEF 977) protein is Polyketide synthase 1.